Consider the following 471-residue polypeptide: 8-amino-7-oxononanoate synthase (471 aa).

Substrate is bound at residue arginine 40. 131–132 (GY) is a pyridoxal 5'-phosphate binding site. Substrate is bound at residue histidine 156. Serine 202, histidine 230, and threonine 258 together coordinate pyridoxal 5'-phosphate. Residue lysine 261 is modified to N6-(pyridoxal phosphate)lysine. Threonine 377 provides a ligand contact to substrate. A disordered region spans residues 409-471 (SEGQTRREAE…LGAARRETAA (63 aa)).

This sequence belongs to the class-II pyridoxal-phosphate-dependent aminotransferase family. BioF subfamily. Homodimer. It depends on pyridoxal 5'-phosphate as a cofactor.

It carries out the reaction 6-carboxyhexanoyl-[ACP] + L-alanine + H(+) = (8S)-8-amino-7-oxononanoate + holo-[ACP] + CO2. The protein operates within cofactor biosynthesis; biotin biosynthesis. Catalyzes the decarboxylative condensation of pimeloyl-[acyl-carrier protein] and L-alanine to produce 8-amino-7-oxononanoate (AON), [acyl-carrier protein], and carbon dioxide. This Burkholderia ambifaria (strain ATCC BAA-244 / DSM 16087 / CCUG 44356 / LMG 19182 / AMMD) (Burkholderia cepacia (strain AMMD)) protein is 8-amino-7-oxononanoate synthase.